The chain runs to 315 residues: Homoserine kinase (315 aa).

ATP is bound at residue 97-107 (PPARGLGSSAT).

This sequence belongs to the GHMP kinase family. Homoserine kinase subfamily.

It is found in the cytoplasm. It carries out the reaction L-homoserine + ATP = O-phospho-L-homoserine + ADP + H(+). Its pathway is amino-acid biosynthesis; L-threonine biosynthesis; L-threonine from L-aspartate: step 4/5. In terms of biological role, catalyzes the ATP-dependent phosphorylation of L-homoserine to L-homoserine phosphate. This chain is Homoserine kinase, found in Prochlorococcus marinus subsp. pastoris (strain CCMP1986 / NIES-2087 / MED4).